Here is a 394-residue protein sequence, read N- to C-terminus: Elongation factor Tu (394 aa).

The tr-type G domain maps to 10 to 205; the sequence is KPHVNIGTIG…VDNWIPLPPR (196 aa). A G1 region spans residues 19–26; the sequence is GHVDHGKT. GTP is bound at residue 19-26; it reads GHVDHGKT. Thr-26 is a Mg(2+) binding site. The segment at 60-64 is G2; that stretch reads GITIN. Positions 81-84 are G3; the sequence is DCPG. Residues 81–85 and 136–139 contribute to the GTP site; these read DCPGH and NKCD. Positions 136 to 139 are G4; the sequence is NKCD. Residues 174-176 form a G5 region; the sequence is SAL.

Belongs to the TRAFAC class translation factor GTPase superfamily. Classic translation factor GTPase family. EF-Tu/EF-1A subfamily. As to quaternary structure, monomer.

The protein localises to the cytoplasm. It catalyses the reaction GTP + H2O = GDP + phosphate + H(+). Functionally, GTP hydrolase that promotes the GTP-dependent binding of aminoacyl-tRNA to the A-site of ribosomes during protein biosynthesis. This chain is Elongation factor Tu, found in Bacteroides thetaiotaomicron (strain ATCC 29148 / DSM 2079 / JCM 5827 / CCUG 10774 / NCTC 10582 / VPI-5482 / E50).